The chain runs to 327 residues: Lipoyl synthase (327 aa).

Residues cysteine 75, cysteine 80, cysteine 86, cysteine 101, cysteine 105, cysteine 108, and serine 315 each coordinate [4Fe-4S] cluster. The 218-residue stretch at 87-304 (FGNGTATFMI…EEEAYKMGFS (218 aa)) folds into the Radical SAM core domain.

It belongs to the radical SAM superfamily. Lipoyl synthase family. It depends on [4Fe-4S] cluster as a cofactor.

The protein localises to the cytoplasm. It catalyses the reaction [[Fe-S] cluster scaffold protein carrying a second [4Fe-4S](2+) cluster] + N(6)-octanoyl-L-lysyl-[protein] + 2 oxidized [2Fe-2S]-[ferredoxin] + 2 S-adenosyl-L-methionine + 4 H(+) = [[Fe-S] cluster scaffold protein] + N(6)-[(R)-dihydrolipoyl]-L-lysyl-[protein] + 4 Fe(3+) + 2 hydrogen sulfide + 2 5'-deoxyadenosine + 2 L-methionine + 2 reduced [2Fe-2S]-[ferredoxin]. It participates in protein modification; protein lipoylation via endogenous pathway; protein N(6)-(lipoyl)lysine from octanoyl-[acyl-carrier-protein]: step 2/2. Its function is as follows. Catalyzes the radical-mediated insertion of two sulfur atoms into the C-6 and C-8 positions of the octanoyl moiety bound to the lipoyl domains of lipoate-dependent enzymes, thereby converting the octanoylated domains into lipoylated derivatives. This is Lipoyl synthase from Variovorax paradoxus (strain S110).